A 1931-amino-acid polypeptide reads, in one-letter code: Cytadherence high molecular weight protein 2 (1931 aa).

Coiled coils occupy residues 1626 to 1659 (KEHQWALEEANKKNSRLAKQLKQLKHHKQALTES), 1768 to 1846 (FNTQ…IKTN), and 1903 to 1930 (HAKKERINQLANEIKTIKELIEKRKQTS).

In terms of biological role, component of the cytoskeleton-like structure which stabilizes the shape of the wall-less Mycoplasma. This cytoskeleton-like network of accessory proteins containing HMW proteins 1 to 5 allows the proper anchoring of cytadhesin proteins in the mycoplasmal membrane at the attachment organelle. The sequence is that of Cytadherence high molecular weight protein 2 (hlp2) from Mycoplasmoides gallisepticum (strain R(low / passage 15 / clone 2)) (Mycoplasma gallisepticum).